Consider the following 322-residue polypeptide: Phosphatidylserine decarboxylase proenzyme (322 aa).

Catalysis depends on charge relay system; for autoendoproteolytic cleavage activity residues Asp90, His147, and Ser254. Residue Ser254 is the Schiff-base intermediate with substrate; via pyruvic acid; for decarboxylase activity of the active site. Ser254 is modified (pyruvic acid (Ser); by autocatalysis). The interval 294-322 is disordered; that stretch reads EAEPAPLPEEEINAEHDASPLVDDKKDES. Over residues 306–322 the composition is skewed to basic and acidic residues; sequence NAEHDASPLVDDKKDES.

Belongs to the phosphatidylserine decarboxylase family. PSD-B subfamily. Prokaryotic type I sub-subfamily. In terms of assembly, heterodimer of a large membrane-associated beta subunit and a small pyruvoyl-containing alpha subunit. It depends on pyruvate as a cofactor. Post-translationally, is synthesized initially as an inactive proenzyme. Formation of the active enzyme involves a self-maturation process in which the active site pyruvoyl group is generated from an internal serine residue via an autocatalytic post-translational modification. Two non-identical subunits are generated from the proenzyme in this reaction, and the pyruvate is formed at the N-terminus of the alpha chain, which is derived from the carboxyl end of the proenzyme. The autoendoproteolytic cleavage occurs by a canonical serine protease mechanism, in which the side chain hydroxyl group of the serine supplies its oxygen atom to form the C-terminus of the beta chain, while the remainder of the serine residue undergoes an oxidative deamination to produce ammonia and the pyruvoyl prosthetic group on the alpha chain. During this reaction, the Ser that is part of the protease active site of the proenzyme becomes the pyruvoyl prosthetic group, which constitutes an essential element of the active site of the mature decarboxylase.

The protein resides in the cell membrane. The enzyme catalyses a 1,2-diacyl-sn-glycero-3-phospho-L-serine + H(+) = a 1,2-diacyl-sn-glycero-3-phosphoethanolamine + CO2. It functions in the pathway phospholipid metabolism; phosphatidylethanolamine biosynthesis; phosphatidylethanolamine from CDP-diacylglycerol: step 2/2. Functionally, catalyzes the formation of phosphatidylethanolamine (PtdEtn) from phosphatidylserine (PtdSer). The sequence is that of Phosphatidylserine decarboxylase proenzyme from Citrobacter koseri (strain ATCC BAA-895 / CDC 4225-83 / SGSC4696).